Consider the following 276-residue polypeptide: 2-dehydro-3-deoxyphosphooctonate aldolase (276 aa).

It belongs to the KdsA family.

It localises to the cytoplasm. It carries out the reaction D-arabinose 5-phosphate + phosphoenolpyruvate + H2O = 3-deoxy-alpha-D-manno-2-octulosonate-8-phosphate + phosphate. The protein operates within carbohydrate biosynthesis; 3-deoxy-D-manno-octulosonate biosynthesis; 3-deoxy-D-manno-octulosonate from D-ribulose 5-phosphate: step 2/3. It participates in bacterial outer membrane biogenesis; lipopolysaccharide biosynthesis. This chain is 2-dehydro-3-deoxyphosphooctonate aldolase, found in Helicobacter acinonychis (strain Sheeba).